A 1159-amino-acid chain; its full sequence is Caspase recruitment domain-containing protein 11 (1159 aa).

Residues 18-110 (EEEALWDNVE…ELYKLVTGKE (93 aa)) form the CARD domain. The tract at residues 111–128 (PTRRFSTIVVEEGHEGLT) is linker. Residues 176–449 (FQERYYKMKE…KDNGSLDQSL (274 aa)) are a coiled coil. A disordered region spans residues 441 to 496 (DNGSLDQSLPRHLPATIISQNLGDTSPRTNGQEADDSSTSEESPEDSKYFLPYHPP). Ser-448 and Ser-466 each carry phosphoserine. The tract at residues 450-671 (PRHLPATIIS…GHVRGTGPLV (222 aa)) is inhibitory domain (ID). Over residues 457–472 (IISQNLGDTSPRTNGQ) the composition is skewed to polar residues. Positions 473-484 (EADDSSTSEESP) are enriched in acidic residues. Phosphoserine occurs at positions 512 and 540. The interval 532–578 (HEEDFTDGSPSSSRSLPVTSSFSKMQPHRSRSSIMSITAEPPGNDSI) is disordered. Positions 540–554 (SPSSSRSLPVTSSFS) are enriched in low complexity. A Phosphoserine; by PKC/PRKCB and PKC/PRKCQ modification is found at Ser-564. At Ser-598 the chain carries Phosphoserine. Positions 610–631 (NHERYSFGPPSIHSSSSSHQSE) are disordered. The span at 620–630 (SIHSSSSSHQS) shows a compositional bias: low complexity. A phosphoserine; by PKC/PRKCB and PKC/PRKCQ mark is found at Ser-649 and Ser-657. In terms of domain architecture, PDZ spans 672–760 (QHTTLNGDGL…LITLHYKVNH (89 aa)). Ser-891 and Ser-930 each carry phosphoserine. Residues 978–1145 (RRRPVLFTPT…LLRVLKDKIV (168 aa)) enclose the Guanylate kinase-like domain.

As to quaternary structure, homodimer; disulfide-linked. Homomultimer; polymerizes following activation, forming a nucleating helical template that seeds BCL10-filament formation via a CARD-CARD interaction. Interacts (via CARD domain) with BCL10 (via CARD domain); interaction takes place following CARD11 activation and polymerization, leading to the formation of a filamentous CBM complex assembly. Component of a CBM complex (CARD11-BCL10-MALT1) complex involved in NF-kappa-B activation. Found in a membrane raft complex, at least composed of BCL10, CARD11, DPP4 and IKBKB. Interacts (via PDZ domain) with DPP4 (via cytoplasmic tail). In terms of processing, phosphorylation at Ser-564, Ser-649 and Ser-657 by PRKCB and PRKCQ leads to a shift from an inactive to an active form that activates the NF-kappa-B signaling.

The protein localises to the cytoplasm. It localises to the membrane raft. Maintained in an autoinhibited state via homodimerization in which the CARD domain forms an extensive interaction with the adjacent linker and coiled-coil regions. Activation downstream of T-cell receptor (TCR) by phosphorylation by PRKCB and PRKCQ triggers CARD11 homooligomerization and BCL10 recruitment, followed by activation of NF-kappa-B. Its function is as follows. Adapter protein that plays a key role in adaptive immune response by transducing the activation of NF-kappa-B downstream of T-cell receptor (TCR) and B-cell receptor (BCR) engagement. Transduces signals downstream TCR or BCR activation via the formation of a multiprotein complex together with BCL10 and MALT1 that induces NF-kappa-B and MAP kinase p38 (MAPK11, MAPK12, MAPK13 and/or MAPK14) pathways. Upon activation in response to TCR or BCR triggering, CARD11 homooligomerizes to form a nucleating helical template that recruits BCL10 via CARD-CARD interaction, thereby promoting polymerization of BCL10 and subsequent recruitment of MALT1: this leads to I-kappa-B kinase (IKK) phosphorylation and degradation, and release of NF-kappa-B proteins for nuclear translocation. Its binding to DPP4 induces T-cell proliferation and NF-kappa-B activation in a T-cell receptor/CD3-dependent manner. Promotes linear ubiquitination of BCL10 by promoting the targeting of BCL10 to RNF31/HOIP. Stimulates the phosphorylation of BCL10. Also activates the TORC1 signaling pathway. The sequence is that of Caspase recruitment domain-containing protein 11 from Mus musculus (Mouse).